The primary structure comprises 129 residues: Small ribosomal subunit protein uS11 (129 aa).

It belongs to the universal ribosomal protein uS11 family. As to quaternary structure, part of the 30S ribosomal subunit. Interacts with proteins S7 and S18. Binds to IF-3.

Functionally, located on the platform of the 30S subunit, it bridges several disparate RNA helices of the 16S rRNA. Forms part of the Shine-Dalgarno cleft in the 70S ribosome. The sequence is that of Small ribosomal subunit protein uS11 from Pseudomonas putida (strain GB-1).